Reading from the N-terminus, the 468-residue chain is Glucose transport protein (468 aa).

At methionine 1–valine 17 the chain is on the cytoplasmic side. Residues leucine 18–isoleucine 38 form a helical membrane-spanning segment. Over asparagine 39–leucine 58 the chain is Extracellular. Residues serine 59–alanine 78 form a helical membrane-spanning segment. Over aspartate 79–isoleucine 84 the chain is Cytoplasmic. A helical membrane pass occupies residues lysine 85–phenylalanine 105. The Extracellular segment spans residues threonine 106 to arginine 114. Residues valine 115–valine 135 form a helical membrane-spanning segment. Residues serine 136 to glutamine 149 are Cytoplasmic-facing. A helical transmembrane segment spans residues leucine 150–alanine 170. Over glycine 171 to arginine 186 the chain is Extracellular. The helical transmembrane segment at tryptophan 187 to proline 207 threads the bilayer. Topologically, residues glutamate 208–proline 265 are cytoplasmic. The chain crosses the membrane as a helical span at residues isoleucine 266–phenylalanine 286. Topologically, residues tyrosine 287–threonine 307 are extracellular. The chain crosses the membrane as a helical span at residues valine 308–phenylalanine 328. The Cytoplasmic portion of the chain corresponds to glycine 329–lysine 331. Residues proline 332–phenylalanine 352 form a helical membrane-spanning segment. Over glycine 353–glycine 366 the chain is Extracellular. The helical transmembrane segment at alanine 367–tryptophan 387 threads the bilayer. The Cytoplasmic portion of the chain corresponds to glycine 388 to alanine 412. A helical transmembrane segment spans residues glycine 413–valine 433. Residues glycine 434 to glycine 436 lie on the Extracellular side of the membrane. A helical transmembrane segment spans residues proline 437–valine 457. Over lysine 458–methionine 468 the chain is Cytoplasmic.

The protein belongs to the major facilitator superfamily. Sugar transporter (TC 2.A.1.1) family.

It localises to the cell membrane. In Synechocystis sp. (strain ATCC 27184 / PCC 6803 / Kazusa), this protein is Glucose transport protein (gtr).